Reading from the N-terminus, the 533-residue chain is Glucose-6-phosphate isomerase (533 aa).

E341 (proton donor) is an active-site residue. Active-site residues include H372 and K501.

This sequence belongs to the GPI family.

It localises to the cytoplasm. It carries out the reaction alpha-D-glucose 6-phosphate = beta-D-fructose 6-phosphate. It functions in the pathway carbohydrate biosynthesis; gluconeogenesis. Its pathway is carbohydrate degradation; glycolysis; D-glyceraldehyde 3-phosphate and glycerone phosphate from D-glucose: step 2/4. In terms of biological role, catalyzes the reversible isomerization of glucose-6-phosphate to fructose-6-phosphate. The polypeptide is Glucose-6-phosphate isomerase (Cereibacter sphaeroides (strain ATCC 17029 / ATH 2.4.9) (Rhodobacter sphaeroides)).